The sequence spans 181 residues: Oligoribonuclease (181 aa).

The Exonuclease domain occupies 8–171 (LIWIDLEMTG…QDIQESIAEL (164 aa)). Residue Tyr-129 is part of the active site.

This sequence belongs to the oligoribonuclease family.

The protein localises to the cytoplasm. Its function is as follows. 3'-to-5' exoribonuclease specific for small oligoribonucleotides. This chain is Oligoribonuclease, found in Shewanella oneidensis (strain ATCC 700550 / JCM 31522 / CIP 106686 / LMG 19005 / NCIMB 14063 / MR-1).